A 137-amino-acid polypeptide reads, in one-letter code: Small ribosomal subunit protein uS12 (137 aa).

Positions 1-57 (MPTINQLVRKPRKSKVEKSKSPALNVGYNSHKKVQTNVSSPQKRGVATRVGTMTPKK) are disordered. A 3-methylthioaspartic acid modification is found at Asp-102.

This sequence belongs to the universal ribosomal protein uS12 family. In terms of assembly, part of the 30S ribosomal subunit. Contacts proteins S8 and S17. May interact with IF1 in the 30S initiation complex.

In terms of biological role, with S4 and S5 plays an important role in translational accuracy. Interacts with and stabilizes bases of the 16S rRNA that are involved in tRNA selection in the A site and with the mRNA backbone. Located at the interface of the 30S and 50S subunits, it traverses the body of the 30S subunit contacting proteins on the other side and probably holding the rRNA structure together. The combined cluster of proteins S8, S12 and S17 appears to hold together the shoulder and platform of the 30S subunit. The protein is Small ribosomal subunit protein uS12 of Streptococcus pneumoniae serotype 2 (strain D39 / NCTC 7466).